We begin with the raw amino-acid sequence, 193 residues long: Probable GTP-binding protein EngB (193 aa).

Positions 22–193 (QLPEFALAGR…EAWGALQKWM (172 aa)) constitute an EngB-type G domain. GTP-binding positions include 30–37 (GRSNVGKS), 57–61 (GKTQT), 75–78 (DVPG), 142–145 (TKAD), and 174–176 (FSA). Mg(2+) is bound by residues Ser37 and Thr59.

The protein belongs to the TRAFAC class TrmE-Era-EngA-EngB-Septin-like GTPase superfamily. EngB GTPase family. Requires Mg(2+) as cofactor.

In terms of biological role, necessary for normal cell division and for the maintenance of normal septation. The polypeptide is Probable GTP-binding protein EngB (Anoxybacillus flavithermus (strain DSM 21510 / WK1)).